A 175-amino-acid polypeptide reads, in one-letter code: Type II restriction enzyme NgoBV (175 aa).

It catalyses the reaction Endonucleolytic cleavage of DNA to give specific double-stranded fragments with terminal 5'-phosphates.. Its function is as follows. A P subtype restriction enzyme that recognizes the double-stranded sequence 5'-GGNNCC-3'; the cleavage site is unknown. This chain is Type II restriction enzyme NgoBV (ngoBVR), found in Neisseria gonorrhoeae.